Here is a 3078-residue protein sequence, read N- to C-terminus: Homeobox-like protein HDP1 (3078 aa).

Disordered regions lie at residues 1–29 (MKRGRRKVDGDGNCPSNGMASSQRNDNSN), 59–164 (LHNS…INDN), 203–306 (SKRK…NIGK), 949–980 (NAEIHESNSPNHNGDKNVDPSDNVTGTKQDEN), 1323–1390 (DEDS…KDRK), 1415–1445 (SSSNYEEGNSSSNEENNISTDKNISNTNNKN), 1939–2046 (KVND…QDKF), 2115–2216 (TNES…QYNY), 2599–2637 (AYMNDNNLSNNNNDNNNDYDNDNNNNNNYSYDNKNDDNI), and 2959–3019 (QQNN…NNGP). Residues 14–29 (CPSNGMASSQRNDNSN) show a composition bias toward polar residues. Basic and acidic residues predominate over residues 59-84 (LHNSSSRESKDMKLSEEPRHINEKCI). Composition is skewed to low complexity over residues 85–94 (NDNNKINNNN) and 114–127 (NNNNNNNKSHTKNN). Polar residues-rich tracts occupy residues 128–137 (IFFQTNNPDT), 148–157 (KQENTSSSLH), 209–229 (NSNNTMPTKKYNNTHQDNNIT), 237–252 (TSSIYDNTCNKNNTVH), and 949–960 (NAEIHESNSPNH). A compositionally biased stretch (basic residues) spans 1368–1380 (RKNKINRGSKGKH). Over residues 1415 to 1433 (SSSNYEEGNSSSNEENNIS) the composition is skewed to low complexity. Polar residues predominate over residues 1434–1445 (TDKNISNTNNKN). A compositionally biased stretch (low complexity) spans 1939–1993 (KVNDSNNSNDANEGNNANYSNDSSNTNNNTSSSTNNSNNNTSCSSQNTTTSSENN). 2 stretches are compositionally biased toward basic and acidic residues: residues 2012–2021 (KDTQKEKNNL) and 2029–2046 (YEDRNKNDEKNINEQDKF). A compositionally biased stretch (polar residues) spans 2115–2126 (TNESIKTNSDQN). The segment covering 2139 to 2160 (MNNDNYNSSYDNVHNDNDNNMV) has biased composition (low complexity). Residues 2163–2177 (DSSRQDNMEKQKSGE) show a composition bias toward basic and acidic residues. Residues 2192 to 2201 (NDNDNDDNND) are compositionally biased toward acidic residues. Composition is skewed to low complexity over residues 2202 to 2216 (NDNNNNNNMNNQYNY), 2602 to 2630 (NDNNLSNNNNDNNNDYDNDNNNNNNYSYD), and 2959 to 2989 (QQNNNNNNDNINNINNMNNNNDNNNNSQKNN). Residues 2990–3006 (LSEVQVSNINTPSSYNI) are compositionally biased toward polar residues. Residues 2991–3078 (SEVQVSNINT…GKRRKNEDNK (88 aa)) form a DNA-binding region.

In terms of assembly, homodimer.

The protein resides in the nucleus. Its subcellular location is the chromosome. Transcriptional regulator which binds to the DNA motifs 5'-GTGCACAC-3' (motif A) and 5'-[GTA]TGTA[CT][GA]TAC-3' (motif B) of genes essential for early gametocyte development, including those critical for the expansion of the inner membrane complex (IMC). This chain is Homeobox-like protein HDP1, found in Plasmodium falciparum (isolate NF54).